The chain runs to 144 residues: Fluoride-specific ion channel FluC 1 (144 aa).

The next 4 helical transmembrane spans lie at L11–G31, L44–I64, V74–V94, and I107–Y127. 2 residues coordinate Na(+): G84 and T87.

It belongs to the fluoride channel Fluc/FEX (TC 1.A.43) family.

The protein resides in the cell membrane. The enzyme catalyses fluoride(in) = fluoride(out). Its activity is regulated as follows. Na(+) is not transported, but it plays an essential structural role and its presence is essential for fluoride channel function. Functionally, fluoride-specific ion channel. Important for reducing fluoride concentration in the cell, thus reducing its toxicity. The sequence is that of Fluoride-specific ion channel FluC 1 from Bacillus cereus (strain ATCC 14579 / DSM 31 / CCUG 7414 / JCM 2152 / NBRC 15305 / NCIMB 9373 / NCTC 2599 / NRRL B-3711).